Consider the following 699-residue polypeptide: Elongation factor G (699 aa).

One can recognise a tr-type G domain in the interval 8-283; the sequence is EHIRNIGICA…AVVDFLPSPI (276 aa). GTP contacts are provided by residues 17-24, 81-85, and 135-138; these read AHIDAGKT, DTPGH, and NKMD.

Belongs to the TRAFAC class translation factor GTPase superfamily. Classic translation factor GTPase family. EF-G/EF-2 subfamily.

The protein resides in the cytoplasm. Functionally, catalyzes the GTP-dependent ribosomal translocation step during translation elongation. During this step, the ribosome changes from the pre-translocational (PRE) to the post-translocational (POST) state as the newly formed A-site-bound peptidyl-tRNA and P-site-bound deacylated tRNA move to the P and E sites, respectively. Catalyzes the coordinated movement of the two tRNA molecules, the mRNA and conformational changes in the ribosome. This is Elongation factor G from Rickettsia felis (strain ATCC VR-1525 / URRWXCal2) (Rickettsia azadi).